Reading from the N-terminus, the 124-residue chain is MKTIFYIALGGGLGSVLRYLTTLVINKYVQTTFPYATFVTNIAGCLLIGLFFGYLEKQNAVSPYLKFFLITGLCGGYTTFSAFSNENIQLLQSNQILIAFLYISLSVFLGLMATWTGLIIAKEL.

The next 4 helical transmembrane spans lie at 4–24, 35–55, 63–83, and 96–116; these read IFYI…TTLV, YATF…FGYL, PYLK…FSAF, and ILIA…ATWT. The Na(+) site is built by Gly-75 and Thr-78.

It belongs to the fluoride channel Fluc/FEX (TC 1.A.43) family.

The protein localises to the cell inner membrane. It catalyses the reaction fluoride(in) = fluoride(out). Its activity is regulated as follows. Na(+) is not transported, but it plays an essential structural role and its presence is essential for fluoride channel function. Functionally, fluoride-specific ion channel. Important for reducing fluoride concentration in the cell, thus reducing its toxicity. In Flavobacterium psychrophilum (strain ATCC 49511 / DSM 21280 / CIP 103535 / JIP02/86), this protein is Fluoride-specific ion channel FluC.